Here is a 157-residue protein sequence, read N- to C-terminus: Phosphopantetheine adenylyltransferase (157 aa).

Ser-9 provides a ligand contact to substrate. ATP contacts are provided by residues 9-10 and His-17; that span reads SF. 3 residues coordinate substrate: Lys-41, Leu-74, and Lys-88. Residues 89–91, Glu-99, and 123–129 contribute to the ATP site; these read GLR and YTHVSSS.

This sequence belongs to the bacterial CoaD family. Homohexamer. The cofactor is Mg(2+).

Its subcellular location is the cytoplasm. The catalysed reaction is (R)-4'-phosphopantetheine + ATP + H(+) = 3'-dephospho-CoA + diphosphate. The protein operates within cofactor biosynthesis; coenzyme A biosynthesis; CoA from (R)-pantothenate: step 4/5. Reversibly transfers an adenylyl group from ATP to 4'-phosphopantetheine, yielding dephospho-CoA (dPCoA) and pyrophosphate. The sequence is that of Phosphopantetheine adenylyltransferase from Micrococcus luteus (strain ATCC 4698 / DSM 20030 / JCM 1464 / CCM 169 / CCUG 5858 / IAM 1056 / NBRC 3333 / NCIMB 9278 / NCTC 2665 / VKM Ac-2230) (Micrococcus lysodeikticus).